Here is a 48-residue protein sequence, read N- to C-terminus: uncharacterized protein (48 aa).

This is an uncharacterized protein from Treponema pallidum (strain Nichols).